A 402-amino-acid chain; its full sequence is Phosphoglycerate kinase (402 aa).

Substrate contacts are provided by residues 24–26, Arg-40, 63–66, Arg-122, and Arg-155; these read DFN and HFGR. Residues Lys-206, Gly-297, Glu-328, and 357 to 360 contribute to the ATP site; that span reads GGDS.

It belongs to the phosphoglycerate kinase family. Monomer.

Its subcellular location is the cytoplasm. It catalyses the reaction (2R)-3-phosphoglycerate + ATP = (2R)-3-phospho-glyceroyl phosphate + ADP. The protein operates within carbohydrate degradation; glycolysis; pyruvate from D-glyceraldehyde 3-phosphate: step 2/5. This chain is Phosphoglycerate kinase, found in Prochlorococcus marinus (strain MIT 9211).